Here is a 263-residue protein sequence, read N- to C-terminus: NAD(P)H-quinone oxidoreductase subunit K, chloroplastic (263 aa).

Positions 64, 65, 129, and 160 each coordinate [4Fe-4S] cluster.

This sequence belongs to the complex I 20 kDa subunit family. NDH is composed of at least 16 different subunits, 5 of which are encoded in the nucleus. [4Fe-4S] cluster serves as cofactor.

The protein resides in the plastid. It is found in the chloroplast thylakoid membrane. It carries out the reaction a plastoquinone + NADH + (n+1) H(+)(in) = a plastoquinol + NAD(+) + n H(+)(out). The catalysed reaction is a plastoquinone + NADPH + (n+1) H(+)(in) = a plastoquinol + NADP(+) + n H(+)(out). NDH shuttles electrons from NAD(P)H:plastoquinone, via FMN and iron-sulfur (Fe-S) centers, to quinones in the photosynthetic chain and possibly in a chloroplast respiratory chain. The immediate electron acceptor for the enzyme in this species is believed to be plastoquinone. Couples the redox reaction to proton translocation, and thus conserves the redox energy in a proton gradient. The protein is NAD(P)H-quinone oxidoreductase subunit K, chloroplastic (ndhK) of Huperzia lucidula (Shining clubmoss).